Consider the following 94-residue polypeptide: Ferredoxin-like protein (94 aa).

2 consecutive 4Fe-4S ferredoxin-type domains span residues 20 to 52 (PHIR…RETN) and 53 to 83 (GKVT…WEWP).

The protein to ferredoxins from P.putida and C.tartarivorum, ferredoxin I from A.vinelandii, ferredoxin II from D.desulfuricans.

In terms of biological role, could be a 3Fe-4S cluster-containing protein. The chain is Ferredoxin-like protein (fixX) from Azotobacter vinelandii.